An 837-amino-acid chain; its full sequence is CoA-transferase/lyase DddD (837 aa).

The Nucleophile role is filled by aspartate 602.

Belongs to the CoA-transferase III family.

Functionally, dimethyl sulfide (DMS)-producing enzyme. Acts both as a transferase and a lyase: uses acetyl-coenzyme A (acetyl-coA) and dimethylsulfoniopropionate (DMSP) as substrates to produce DMS, acetate and 3-hydroxypropionate-CoA (3HP-CoA). Mediates the CoA-transferase prior to lyase activity. DMS is the principal form by which sulfur is transported from oceans to the atmosphere and is a key component of the ocean sulfur cycle. In Marinomonas sp. (strain MWYL1), this protein is CoA-transferase/lyase DddD.